A 118-amino-acid polypeptide reads, in one-letter code: UPF0344 protein Aflv_2205 (118 aa).

4 helical membrane passes run 4 to 24 (AHITTWVVALILFVVAIALQA), 32 to 52 (MLHMLLRLFYILIIATGAWIL), 60 to 80 (FLYIVKVIVGLWVIGTMEMIL), and 96 to 116 (FIVAFVVVLYLGFKLPFGFSF).

The protein belongs to the UPF0344 family.

The protein localises to the cell membrane. The sequence is that of UPF0344 protein Aflv_2205 from Anoxybacillus flavithermus (strain DSM 21510 / WK1).